We begin with the raw amino-acid sequence, 925 residues long: Protein translocase subunit SecA (925 aa).

Residues Gln-87, 105–109 (GEGKT), and Asp-531 each bind ATP. The interval 867–909 (AAGADMRFQHSQPESVLHKPEAGEGEEAQPFRRETPKVGRNDP) is disordered. A compositionally biased stretch (basic and acidic residues) spans 895–906 (QPFRRETPKVGR). Residues Cys-910, Cys-912, Cys-921, and His-922 each coordinate Zn(2+).

Belongs to the SecA family. Monomer and homodimer. Part of the essential Sec protein translocation apparatus which comprises SecA, SecYEG and auxiliary proteins SecDF-YajC and YidC. Zn(2+) is required as a cofactor.

The protein resides in the cell inner membrane. The protein localises to the cytoplasm. It catalyses the reaction ATP + H2O + cellular proteinSide 1 = ADP + phosphate + cellular proteinSide 2.. In terms of biological role, part of the Sec protein translocase complex. Interacts with the SecYEG preprotein conducting channel. Has a central role in coupling the hydrolysis of ATP to the transfer of proteins into and across the cell membrane, serving both as a receptor for the preprotein-SecB complex and as an ATP-driven molecular motor driving the stepwise translocation of polypeptide chains across the membrane. The polypeptide is Protein translocase subunit SecA (Thioalkalivibrio sulfidiphilus (strain HL-EbGR7)).